Here is an 86-residue protein sequence, read N- to C-terminus: Small ribosomal subunit protein bS18 (86 aa).

This sequence belongs to the bacterial ribosomal protein bS18 family. Part of the 30S ribosomal subunit. Forms a tight heterodimer with protein bS6.

Binds as a heterodimer with protein bS6 to the central domain of the 16S rRNA, where it helps stabilize the platform of the 30S subunit. The sequence is that of Small ribosomal subunit protein bS18 from Campylobacter concisus (strain 13826).